Consider the following 584-residue polypeptide: Beta-fructofuranosidase, insoluble isoenzyme CWINV1 (584 aa).

A signal peptide spans 1 to 28 (MTKEVCSNIGLWLLLTLLIGNYVVNLEA). Residues 63-66 (WMND), Q82, W90, and 125-126 (WS) contribute to the substrate site. D66 is an active-site residue. N-linked (GlcNAc...) asparagine glycans are attached at residues N159 and N186. Residues 191–192 (RD), E246, and D282 contribute to the substrate site. N-linked (GlcNAc...) asparagine glycans are attached at residues N342 and N446. C442 and C491 are disulfide-bonded.

The protein belongs to the glycosyl hydrolase 32 family. In terms of tissue distribution, expressed in seedlings, leaves, flowers, and seeds.

Its subcellular location is the secreted. The protein resides in the extracellular space. The protein localises to the apoplast. It is found in the cell wall. It carries out the reaction Hydrolysis of terminal non-reducing beta-D-fructofuranoside residues in beta-D-fructofuranosides.. Its function is as follows. Beta-fructofuranosidase that can use sucrose and 1-kestose, and, to a lower extent, neokestose and levan, as substrates, but not inuline. In Arabidopsis thaliana (Mouse-ear cress), this protein is Beta-fructofuranosidase, insoluble isoenzyme CWINV1 (CWINV1).